We begin with the raw amino-acid sequence, 335 residues long: Erlin-2-A (335 aa).

At Met-1–Ser-2 the chain is on the cytoplasmic side. Residues His-3–Ile-23 form a helical membrane-spanning segment. Topologically, residues His-24–Glu-335 are lumenal. N-linked (GlcNAc...) asparagine glycosylation occurs at Asn-106.

Belongs to the band 7/mec-2 family.

It is found in the endoplasmic reticulum membrane. In terms of biological role, mediates the endoplasmic reticulum-associated degradation (ERAD) of inositol 1,4,5-trisphosphate receptors (IP3Rs). Promotes sterol-accelerated ERAD of HMGCR. Involved in regulation of cellular cholesterol homeostasis by regulation the SREBP signaling pathway. In Xenopus laevis (African clawed frog), this protein is Erlin-2-A (erlin2-a).